The sequence spans 552 residues: uncharacterized protein (552 aa).

A DhaL domain is found at 8-200 (KLFADMIIQG…LLCVYEGFLK (193 aa)).

This is an uncharacterized protein from Staphylococcus epidermidis (strain ATCC 12228 / FDA PCI 1200).